Here is a 153-residue protein sequence, read N- to C-terminus: IAA acetyltransferase (153 aa).

The 150-residue stretch at 4–153 (VTIARESPLQ…PLSLFMEKPL (150 aa)) folds into the N-acetyltransferase domain.

Its function is as follows. Participates in the tryptophan-dependent indole-3-acetic acid production, which is a phytohormone released by A.brasilense. In Azospirillum brasilense, this protein is IAA acetyltransferase.